Here is a 399-residue protein sequence, read N- to C-terminus: Phosphoglycerate kinase (399 aa).

Substrate contacts are provided by residues 22-24 (DFN), Arg-38, 61-64 (HLGR), Arg-120, and Arg-153. ATP is bound by residues Lys-204, Glu-326, and 353–356 (GGDT).

Belongs to the phosphoglycerate kinase family. In terms of assembly, monomer.

It localises to the cytoplasm. It carries out the reaction (2R)-3-phosphoglycerate + ATP = (2R)-3-phospho-glyceroyl phosphate + ADP. The protein operates within carbohydrate degradation; glycolysis; pyruvate from D-glyceraldehyde 3-phosphate: step 2/5. The sequence is that of Phosphoglycerate kinase from Geotalea daltonii (strain DSM 22248 / JCM 15807 / FRC-32) (Geobacter daltonii).